Consider the following 344-residue polypeptide: N-acetyl-gamma-glutamyl-phosphate reductase (344 aa).

Residue Cys150 is part of the active site.

It belongs to the NAGSA dehydrogenase family. Type 1 subfamily.

Its subcellular location is the cytoplasm. It carries out the reaction N-acetyl-L-glutamate 5-semialdehyde + phosphate + NADP(+) = N-acetyl-L-glutamyl 5-phosphate + NADPH + H(+). Its pathway is amino-acid biosynthesis; L-arginine biosynthesis; N(2)-acetyl-L-ornithine from L-glutamate: step 3/4. Its function is as follows. Catalyzes the NADPH-dependent reduction of N-acetyl-5-glutamyl phosphate to yield N-acetyl-L-glutamate 5-semialdehyde. The sequence is that of N-acetyl-gamma-glutamyl-phosphate reductase from Pseudomonas fluorescens (strain SBW25).